The following is a 362-amino-acid chain: UDP-N-acetylglucosamine--N-acetylmuramyl-(pentapeptide) pyrophosphoryl-undecaprenol N-acetylglucosamine transferase (362 aa).

UDP-N-acetyl-alpha-D-glucosamine contacts are provided by residues 15-17 (TGG), asparagine 127, arginine 165, serine 191, isoleucine 247, 266-271 (ALTVSE), and glutamine 292.

Belongs to the glycosyltransferase 28 family. MurG subfamily.

The protein resides in the cell inner membrane. The catalysed reaction is di-trans,octa-cis-undecaprenyl diphospho-N-acetyl-alpha-D-muramoyl-L-alanyl-D-glutamyl-meso-2,6-diaminopimeloyl-D-alanyl-D-alanine + UDP-N-acetyl-alpha-D-glucosamine = di-trans,octa-cis-undecaprenyl diphospho-[N-acetyl-alpha-D-glucosaminyl-(1-&gt;4)]-N-acetyl-alpha-D-muramoyl-L-alanyl-D-glutamyl-meso-2,6-diaminopimeloyl-D-alanyl-D-alanine + UDP + H(+). Its pathway is cell wall biogenesis; peptidoglycan biosynthesis. Its function is as follows. Cell wall formation. Catalyzes the transfer of a GlcNAc subunit on undecaprenyl-pyrophosphoryl-MurNAc-pentapeptide (lipid intermediate I) to form undecaprenyl-pyrophosphoryl-MurNAc-(pentapeptide)GlcNAc (lipid intermediate II). This Shewanella baltica (strain OS185) protein is UDP-N-acetylglucosamine--N-acetylmuramyl-(pentapeptide) pyrophosphoryl-undecaprenol N-acetylglucosamine transferase.